Consider the following 236-residue polypeptide: Heme oxygenase (236 aa).

His-17 contributes to the heme b binding site.

The protein belongs to the heme oxygenase family.

It is found in the plastid. It localises to the chloroplast. It carries out the reaction heme b + 3 reduced [NADPH--hemoprotein reductase] + 3 O2 = biliverdin IXalpha + CO + Fe(2+) + 3 oxidized [NADPH--hemoprotein reductase] + 3 H2O + H(+). Catalyzes the opening of the heme ring with the release of iron. Key enzyme in the synthesis of the chromophoric part of the photosynthetic antennae. This chain is Heme oxygenase (pbsA), found in Porphyra purpurea (Red seaweed).